Here is a 260-residue protein sequence, read N- to C-terminus: Cytochrome c oxidase subunit 3 (260 aa).

The Mitochondrial matrix segment spans residues 1–15 (MAHQAHAYHMVDPSP). A helical transmembrane segment spans residues 16 to 34 (WPLTGAVAALLLTSGLAMW). Residues 35–40 (FHFGSM) lie on the Mitochondrial intermembrane side of the membrane. A helical transmembrane segment spans residues 41–66 (ILLTLGLITMVLTMIQWWRDVIREGT). At 67–72 (FQGHHT) the chain is on the mitochondrial matrix side. Residues 73-105 (PPVQKGLRYGMILFITSEVFFFIGFFWAFYNSS) traverse the membrane as a helical segment. Residues 106–128 (LAPTYELGECWPPTGITPLNPFE) are Mitochondrial intermembrane-facing. A helical membrane pass occupies residues 129–152 (VPLLNTAVLLASGVTVTWAHHSIM). Residues 153-155 (HGD) lie on the Mitochondrial matrix side of the membrane. A helical membrane pass occupies residues 156 to 183 (RKEAIQSLTLTILLGLYFTALQAMEYYE). The Mitochondrial intermembrane segment spans residues 184-190 (APFTIAD). The helical transmembrane segment at 191–223 (GVYGSTFFVATGFHGLHVIIGSLFLSVCLLRQI) threads the bilayer. Residues 224–232 (QYHFTSKHH) lie on the Mitochondrial matrix side of the membrane. Residues 233–255 (FGFEAAWYWHFVDVVWLFLYVSI) form a helical membrane-spanning segment. Topologically, residues 256-260 (YWWGS) are mitochondrial intermembrane.

Belongs to the cytochrome c oxidase subunit 3 family. In terms of assembly, component of the cytochrome c oxidase (complex IV, CIV), a multisubunit enzyme composed of 14 subunits. The complex is composed of a catalytic core of 3 subunits MT-CO1, MT-CO2 and MT-CO3, encoded in the mitochondrial DNA, and 11 supernumerary subunits COX4I, COX5A, COX5B, COX6A, COX6B, COX6C, COX7A, COX7B, COX7C, COX8 and NDUFA4, which are encoded in the nuclear genome. The complex exists as a monomer or a dimer and forms supercomplexes (SCs) in the inner mitochondrial membrane with NADH-ubiquinone oxidoreductase (complex I, CI) and ubiquinol-cytochrome c oxidoreductase (cytochrome b-c1 complex, complex III, CIII), resulting in different assemblies (supercomplex SCI(1)III(2)IV(1) and megacomplex MCI(2)III(2)IV(2)).

Its subcellular location is the mitochondrion inner membrane. The enzyme catalyses 4 Fe(II)-[cytochrome c] + O2 + 8 H(+)(in) = 4 Fe(III)-[cytochrome c] + 2 H2O + 4 H(+)(out). Functionally, component of the cytochrome c oxidase, the last enzyme in the mitochondrial electron transport chain which drives oxidative phosphorylation. The respiratory chain contains 3 multisubunit complexes succinate dehydrogenase (complex II, CII), ubiquinol-cytochrome c oxidoreductase (cytochrome b-c1 complex, complex III, CIII) and cytochrome c oxidase (complex IV, CIV), that cooperate to transfer electrons derived from NADH and succinate to molecular oxygen, creating an electrochemical gradient over the inner membrane that drives transmembrane transport and the ATP synthase. Cytochrome c oxidase is the component of the respiratory chain that catalyzes the reduction of oxygen to water. Electrons originating from reduced cytochrome c in the intermembrane space (IMS) are transferred via the dinuclear copper A center (CU(A)) of subunit 2 and heme A of subunit 1 to the active site in subunit 1, a binuclear center (BNC) formed by heme A3 and copper B (CU(B)). The BNC reduces molecular oxygen to 2 water molecules using 4 electrons from cytochrome c in the IMS and 4 protons from the mitochondrial matrix. This is Cytochrome c oxidase subunit 3 (mt-co3) from Xenopus laevis (African clawed frog).